The following is a 514-amino-acid chain: Retron Vc95 probable ATPase (514 aa).

An ATP-binding motif is present at residues 92–99; sequence GNNGSGKS.

Probable ATPase component of antiviral defense system retron Vc95, composed of a non-coding RNA (ncRNA), a reverse transcriptase (RT), this protein and a putative HNH endonuclease. Expression of retron Vc95 confers protection against bacteriophages T2, T4 and T6. At multiplicity of infection (MOI) of 0.02 cultures slow growth when infected with T4 but do not collapse, at MOI 2 cultures enter growth stasis. The polypeptide is Retron Vc95 probable ATPase (Vibrio cholerae serotype O1 biovar El Tor).